Here is a 9518-residue protein sequence, read N- to C-terminus: Nonribosomal peptide synthetase ungA' (9518 aa).

An adenylation 1 region spans residues 214 to 611 (ERARETPNAP…ARKDDQVKVR (398 aa)). The region spanning 738-814 (APRTEMEWRL…DLAEVARLEQ (77 aa)) is the Carrier 1 domain. The residue at position 775 (Ser-775) is an O-(pantetheine 4'-phosphoryl)serine. Positions 853 to 1250 (DLLPCSPLQE…EEVLRQISRE (398 aa)) are condensation 1. Residues 1292–1695 (QRVQEQPDRP…GRKDTQVKIR (404 aa)) are adenylation 2. In terms of domain architecture, Carrier 2 spans 1822–1898 (LPQTELERRL…RLAHCSQTEQ (77 aa)). At Ser-1859 the chain carries O-(pantetheine 4'-phosphoryl)serine. The interval 1911–2336 (TFALSPIQQL…QRSLEVVAKE (426 aa)) is epimerization 1. Residues 2376–2803 (EDIYPCSPVQ…DNLQIASSQD (428 aa)) form a condensation 2 region. The tract at residues 2829-3224 (RIQQQPEAPA…NRKDNQVKIR (396 aa)) is adenylation 3. The 77-residue stretch at 3352–3428 (APATASEQRL…DMAQTLKVES (77 aa)) folds into the Carrier 3 domain. Ser-3389 carries the post-translational modification O-(pantetheine 4'-phosphoryl)serine. The condensation 3 stretch occupies residues 3465-3869 (EDVLPCTPLQ…QVCKEASQYL (405 aa)). The tract at residues 3906–4307 (QQAHQRPNAS…GRRDAQVKIR (402 aa)) is adenylation 4. In terms of domain architecture, Carrier 4 spans 4436 to 4512 (TPTTITECRI…RLAACTTPVD (77 aa)). At Ser-4473 the chain carries O-(pantetheine 4'-phosphoryl)serine. Residues 4527 to 4954 (ALSPIQQLFV…EDAAQELPSL (428 aa)) form an epimerization 2 region. The condensation 4 stretch occupies residues 4990–5411 (VEDIYPCSPI…ANLISKEDLR (422 aa)). Residues 5433–5829 (SEQAQNQPDA…GRKDGQVKIR (397 aa)) are adenylation 5. Residues 5957 to 6033 (VASSPVELAL…QLAKNSGLQA (77 aa)) form the Carrier 5 domain. Ser-5994 bears the O-(pantetheine 4'-phosphoryl)serine mark. An epimerization 3 region spans residues 6050 to 6470 (ELSPIQRMFF…CEHSLVMAAH (421 aa)). A condensation 5 region spans residues 6512–6856 (VEDIYPCTPI…TGISVQNNAS (345 aa)). Residues 6947–7338 (LRPNSSAIHA…GRKDSQVKVR (392 aa)) are adenylation 6. A Carrier 6 domain is found at 7464–7540 (LPRTEVEMQL…GLAPSAASQA (77 aa)). The residue at position 7501 (Ser-7501) is an O-(pantetheine 4'-phosphoryl)serine. Residues 7555 to 7978 (ELSPIQQMFI…LQTAARELPH (424 aa)) are epimerization 4. Residues 8016–8444 (VEDIYPLTPI…QVDLAGRHDQ (429 aa)) are condensation 6. Positions 8468–8867 (MQCQQRPDAT…SRKDAQVKIR (400 aa)) are adenylation 7. One can recognise a Carrier 7 domain in the interval 8995–9071 (PLTTEMEWRL…DMAHYLREGQ (77 aa)). Ser-9032 is modified (O-(pantetheine 4'-phosphoryl)serine). The segment at 9111-9454 (DVYPTTELQD…DNLEHDAGTS (344 aa)) is condensation 7.

The protein belongs to the NRP synthetase family.

The protein operates within secondary metabolite biosynthesis. In terms of biological role, nonribosomal peptide synthetase; part of the gene cluster that mediates the biosynthesis of the unguisins, gamma-aminobutyric acid (GABA)-containing fungal cyclic heptapeptides with the amino acid sequence cyclo-(D-Ala1-D-Val2-L-Leu3-beta-MePhe4-D-Ala5-D-Trp6-GABA7) for unguisin H and cyclo-(D-Ala1-D-Ala2-L-Leu3-beta-MePhe4-D-Ala5-D-Trp6-GABA7) for unguisin I. UngA' is the main enzyme within the cluster which condenses the 7 residues using its respective 7 modules. The terminal condensation domain (Ct) is involved in cyclization with D-alanine and thereby releasing of unguisins H and I. The alanine racemase ungC' provides D-alanine, which is then accepted by the first adenylation domain of ungA', whereas the methyltransferase ungE' provides the (2R,3R)-beta-methylphenylalanine residue incorporated by the module 4. Finally, the hydrolase ungD' catalyzes the hydrolysis between the D-tryptophan and GABA residues of unguisins H and I to produce the corresponding linear peptides. This Aspergillus campestris (strain IBT 28561) protein is Nonribosomal peptide synthetase ungA'.